Reading from the N-terminus, the 294-residue chain is Aquaporin NIP1-2 (294 aa).

The residue at position 1 (methionine 1) is an N-acetylmethionine. The next 2 helical transmembrane spans lie at 54–74 (LMAE…AVAV) and 82–102 (VTLP…VYSL). An NPA 1 motif is present at residues 111–113 (NPA). The next 3 helical transmembrane spans lie at 133-153 (VISQ…LFGL), 177-197 (SFVI…GVAT), and 201-221 (AIGE…VIIA). Residues 230–232 (NPG) carry the NPA 2 motif. A helical membrane pass occupies residues 248–268 (WIYIVSPIVGAVSGAWVYNMV). Residue serine 283 is modified to Phosphoserine.

This sequence belongs to the MIP/aquaporin (TC 1.A.8) family. NIP (TC 1.A.8.12) subfamily. As to expression, expressed in developing seeds.

It is found in the membrane. In terms of biological role, water channel probably required to promote glycerol permeability and water transport across cell membranes. The protein is Aquaporin NIP1-2 (NIP1-2) of Arabidopsis thaliana (Mouse-ear cress).